Consider the following 753-residue polypeptide: 5-methyltetrahydropteroyltriglutamate--homocysteine methyltransferase (753 aa).

Residues 17 to 20 (RELK) and Lys-117 contribute to the 5-methyltetrahydropteroyltri-L-glutamate site. L-homocysteine-binding positions include 431-433 (IGS) and Glu-484. Residues 431-433 (IGS) and Glu-484 contribute to the L-methionine site. 5-methyltetrahydropteroyltri-L-glutamate is bound by residues 515 to 516 (RC) and Trp-561. Asp-599 serves as a coordination point for L-homocysteine. Asp-599 contributes to the L-methionine binding site. Glu-605 serves as a coordination point for 5-methyltetrahydropteroyltri-L-glutamate. Residues His-641, Cys-643, and Glu-665 each contribute to the Zn(2+) site. The active-site Proton donor is His-694. Residue Cys-726 participates in Zn(2+) binding.

The protein belongs to the vitamin-B12 independent methionine synthase family. Zn(2+) serves as cofactor.

It catalyses the reaction 5-methyltetrahydropteroyltri-L-glutamate + L-homocysteine = tetrahydropteroyltri-L-glutamate + L-methionine. It participates in amino-acid biosynthesis; L-methionine biosynthesis via de novo pathway; L-methionine from L-homocysteine (MetE route): step 1/1. Functionally, catalyzes the transfer of a methyl group from 5-methyltetrahydrofolate to homocysteine resulting in methionine formation. The protein is 5-methyltetrahydropteroyltriglutamate--homocysteine methyltransferase of Shigella flexneri.